Reading from the N-terminus, the 268-residue chain is UPF0328 protein ECU09_2030 (268 aa).

This sequence belongs to the UPF0328 family.

The sequence is that of UPF0328 protein ECU09_2030 from Encephalitozoon cuniculi (strain GB-M1) (Microsporidian parasite).